A 135-amino-acid chain; its full sequence is Gene 52 protein (135 aa).

Disordered regions lie at residues 1–20 and 110–135; these read MASG…PTPE and LGGR…AEKQ. Basic residues predominate over residues 122 to 135; sequence SKPRGRSKHRAEKQ.

This sequence belongs to the herpesviridae BLRF2 family.

The protein is Gene 52 protein (52) of Equine herpesvirus 2 (strain 86/87) (EHV-2).